The sequence spans 486 residues: N-succinylglutamate 5-semialdehyde dehydrogenase (486 aa).

220 to 225 (GSSRTG) lines the NAD(+) pocket. Residues Glu-243 and Cys-277 contribute to the active site.

It belongs to the aldehyde dehydrogenase family. AstD subfamily.

The catalysed reaction is N-succinyl-L-glutamate 5-semialdehyde + NAD(+) + H2O = N-succinyl-L-glutamate + NADH + 2 H(+). It participates in amino-acid degradation; L-arginine degradation via AST pathway; L-glutamate and succinate from L-arginine: step 4/5. In terms of biological role, catalyzes the NAD-dependent reduction of succinylglutamate semialdehyde into succinylglutamate. The polypeptide is N-succinylglutamate 5-semialdehyde dehydrogenase (Shewanella putrefaciens (strain CN-32 / ATCC BAA-453)).